A 273-amino-acid polypeptide reads, in one-letter code: Bifunctional protein FolD (273 aa).

NADP(+) is bound by residues 155–157, S180, and T221; that span reads GRS.

Belongs to the tetrahydrofolate dehydrogenase/cyclohydrolase family. As to quaternary structure, homodimer.

The catalysed reaction is (6R)-5,10-methylene-5,6,7,8-tetrahydrofolate + NADP(+) = (6R)-5,10-methenyltetrahydrofolate + NADPH. It carries out the reaction (6R)-5,10-methenyltetrahydrofolate + H2O = (6R)-10-formyltetrahydrofolate + H(+). It functions in the pathway one-carbon metabolism; tetrahydrofolate interconversion. Functionally, catalyzes the oxidation of 5,10-methylenetetrahydrofolate to 5,10-methenyltetrahydrofolate and then the hydrolysis of 5,10-methenyltetrahydrofolate to 10-formyltetrahydrofolate. The protein is Bifunctional protein FolD of Coprothermobacter proteolyticus (strain ATCC 35245 / DSM 5265 / OCM 4 / BT).